The sequence spans 416 residues: Imidazolonepropionase (416 aa).

The Fe(3+) site is built by histidine 78 and histidine 80. Residues histidine 78 and histidine 80 each coordinate Zn(2+). Residues arginine 87, tyrosine 150, and histidine 183 each coordinate 4-imidazolone-5-propanoate. Tyrosine 150 is an N-formimidoyl-L-glutamate binding site. Histidine 248 lines the Fe(3+) pocket. Histidine 248 contributes to the Zn(2+) binding site. Position 251 (glutamine 251) interacts with 4-imidazolone-5-propanoate. Residue aspartate 323 participates in Fe(3+) binding. Aspartate 323 is a Zn(2+) binding site. Asparagine 325 and glycine 327 together coordinate N-formimidoyl-L-glutamate. Threonine 328 serves as a coordination point for 4-imidazolone-5-propanoate.

It belongs to the metallo-dependent hydrolases superfamily. HutI family. The cofactor is Zn(2+). Fe(3+) is required as a cofactor.

The protein localises to the cytoplasm. It carries out the reaction 4-imidazolone-5-propanoate + H2O = N-formimidoyl-L-glutamate. It participates in amino-acid degradation; L-histidine degradation into L-glutamate; N-formimidoyl-L-glutamate from L-histidine: step 3/3. Its function is as follows. Catalyzes the hydrolytic cleavage of the carbon-nitrogen bond in imidazolone-5-propanoate to yield N-formimidoyl-L-glutamate. It is the third step in the universal histidine degradation pathway. The sequence is that of Imidazolonepropionase from Vibrio campbellii (strain ATCC BAA-1116).